Consider the following 439-residue polypeptide: MKRAAIRLWTLNKGLLTHGRGLSQGSQYKISEPLHIHQVRDKLREIVGVSTVWRDHVKAMEERKLLHSFLPKSQKVLPPRKMRDSYIEVLLPLGTDPELRDKYVTVQNTVRFGRILEDLDSLGVLVCYMHNHNHSTKMSPLSIVTVLVDKIDMCKHSLSPEQDIKFTGHVSWVGNTSMEVKMKMFQLHNDEKYWPVLDATFVMVARDSENKGPAFVNPLIPENKEEEELFKQGELNKSRRIAFSTSSLLKVAPSSEERNIIHELFLTTLDPKTISFQSRILPPKAVWMEDTKLKSLDICHPQERNVFNRIFGGFLMRKAYELAWATACSFGGSRPYVVTVDDIMFQKPVEVGSLLFLSSQVCFTQDNYIQVRVHSEVSSLDSREHMTTNVFHFTFMSEKEVPLIFPKTYGESMLYLDGQRHFKSMSTPVTLKKDYPVEP.

The transit peptide at 1–21 directs the protein to the mitochondrion; that stretch reads MKRAAIRLWTLNKGLLTHGRG. 2 consecutive HotDog ACOT-type domains span residues 85-209 and 289-401; these read SYIE…RDSE and EDTK…EKEV. Lys102 is modified (N6-acetyllysine).

This sequence belongs to the acyl coenzyme A hydrolase family. Interacts with NYAP1, NYAP2 and MYO16. As to expression, widely expressed.

The protein localises to the mitochondrion. It localises to the mitochondrion matrix. The protein resides in the mitochondrion inner membrane. The enzyme catalyses butanoyl-CoA + H2O = butanoate + CoA + H(+). It catalyses the reaction propanoyl-CoA + H2O = propanoate + CoA + H(+). The catalysed reaction is hexadecanoyl-CoA + H2O = hexadecanoate + CoA + H(+). It carries out the reaction octanoyl-CoA + H2O = octanoate + CoA + H(+). The enzyme catalyses decanoyl-CoA + H2O = decanoate + CoA + H(+). It catalyses the reaction tetradecanoyl-CoA + H2O = tetradecanoate + CoA + H(+). The catalysed reaction is 4,8-dimethylnonanoyl-CoA + H2O = 4,8-dimethylnonanoate + CoA + H(+). It carries out the reaction 3-methylbutanoyl-CoA + H2O = 3-methylbutanoate + CoA + H(+). The enzyme catalyses 2-methylpropanoyl-CoA + H2O = 2-methylpropanoate + CoA + H(+). The protein operates within lipid metabolism; fatty acid metabolism. With respect to regulation, strongly inhibited by NADH and CoA. Functionally, mitochondrial acyl-CoA thioesterase. Catalyzes the hydrolysis of acyl-CoAs into free fatty acids and coenzyme A (CoA), regulating their respective intracellular levels. Shows a clear preference for hydrophobic short-, medium-, and long-chain saturated acyl-CoAs with some activity also with short-chain dicarboxylic CoA esters. Regulates both mitochondrial lipid and amino acid metabolism. The chain is Acyl-coenzyme A thioesterase 9, mitochondrial (Acot9) from Mus musculus (Mouse).